Reading from the N-terminus, the 483-residue chain is BTB/POZ domain and ankyrin repeat-containing protein COCH (483 aa).

The region spanning 25-105 (SDVVFSVEGR…LYSGQVSIVP (81 aa)) is the BTB domain. The segment at 111–125 (RPNCGDRGCWHTHCT) adopts a C2HC NPR-type zinc-finger fold. Positions 114, 119, 121, and 124 each coordinate Zn(2+). ANK repeat units lie at residues 249–278 (QKIR…LNLD), 279–308 (EALA…DVNF), 313–342 (TGKT…DPNV), and 346–380 (DGVT…KLRL). Disordered regions lie at residues 395 to 435 (EEGN…NSNM) and 450 to 483 (MSTS…SHDY). Residues 398–414 (NNNNNANNNNTGSSATN) show a composition bias toward low complexity. The span at 456-465 (DSGDDDHNSN) shows a compositional bias: basic and acidic residues.

It belongs to the plant 'ANKYRIN-BTB/POZ' family. 'NOOT-BOP-COCH-like' (NBCL) subfamily. In terms of assembly, homodimer.

The protein resides in the nucleus. It is found in the cytoplasm. The protein localises to the cell membrane. The protein operates within protein modification; protein ubiquitination. In terms of biological role, may act as a substrate-specific adapter of an E3 ubiquitin-protein ligase complex (CUL3-RBX1-BTB) which mediates the ubiquitination and subsequent proteasomal degradation of target proteins. Transcriptional co-regulator involved in the promotion of leaf and floral meristem fate and determinacy. Promotes normal stipule growth and development. Required for the abscission of senescent organs, probably by regulating the cell wall disorganization in abscission zones (AZs, e.g. pulvini at the base of leaves). Down-regulates UNI expression in primordia of leaves and secondary inflorescences, and thereby controls their sizes and/or structures. Involved in the coordination of the symbiotic nodule developmental program. Promotes the formation of root nodules by interacting directly with APP1 to modulate the expression of the nuclear transcription factor Y subunit (NF-YA1), a key nodulin. Necessary for the robust maintenance of nodule identity throughout the nodule developmental program. This Pisum sativum (Garden pea) protein is BTB/POZ domain and ankyrin repeat-containing protein COCH.